Here is an 82-residue protein sequence, read N- to C-terminus: Splicing factor U2AF 35 kDa subunit (82 aa).

N-acetylalanine is present on alanine 2. Residues 12–40 form a C3H1-type zinc finger; the sequence is EKDKVNCSFYFKIGACRHGDRCSRLHNKP. Residue lysine 39 is modified to N6-methyllysine. In terms of domain architecture, RRM spans 65 to 82; the sequence is SHCHVSDVEVQEHYDNFF.

It belongs to the splicing factor SR family. Identified in the spliceosome C complex. Heterodimer with U2AF2. Interacts (via RS domain) with PHF5A (via N-terminus). Interacts with ZRANB2. Interacts with SDE2. Interacts with SF3B1.

The protein localises to the nucleus. The protein resides in the nucleus speckle. In terms of biological role, plays a critical role in both constitutive and enhancer-dependent splicing by mediating protein-protein interactions and protein-RNA interactions required for accurate 3'-splice site selection. Recruits U2 snRNP to the branch point. Directly mediates interactions between U2AF2 and proteins bound to the enhancers and thus may function as a bridge between U2AF2 and the enhancer complex to recruit it to the adjacent intron. The protein is Splicing factor U2AF 35 kDa subunit (U2AF1) of Sus scrofa (Pig).